The sequence spans 488 residues: Facilitated trehalose transporter Tret1-2 homolog (488 aa).

Residues Met-1–Gln-28 lie on the Cytoplasmic side of the membrane. A helical transmembrane segment spans residues Val-29–Thr-49. The Extracellular segment spans residues Ser-50–Ser-72. Residues Trp-73–Ile-93 traverse the membrane as a helical segment. The Cytoplasmic portion of the chain corresponds to Glu-94 to Thr-105. Residues Ala-106 to Leu-126 traverse the membrane as a helical segment. Residues Cys-127–Arg-129 lie on the Extracellular side of the membrane. Residues Phe-130–Thr-150 traverse the membrane as a helical segment. Topologically, residues Leu-151–Gly-160 are cytoplasmic. The chain crosses the membrane as a helical span at residues Leu-161–Met-181. Asn-182 carries N-linked (GlcNAc...) asparagine glycosylation. Topologically, residues Asn-182 to Ser-184 are extracellular. Residues Ile-185–Pro-205 traverse the membrane as a helical segment. Topologically, residues Glu-206–Pro-268 are cytoplasmic. A helical membrane pass occupies residues Leu-269 to Phe-289. Over Tyr-290–Asn-305 the chain is Extracellular. The helical transmembrane segment at Leu-306–Ile-326 threads the bilayer. The Cytoplasmic segment spans residues Asp-327–Lys-332. The helical transmembrane segment at Ile-333–Phe-353 threads the bilayer. Topologically, residues Tyr-354 to Cys-372 are extracellular. A helical membrane pass occupies residues Phe-373 to Gly-393. Residues Glu-394–Gly-402 are Cytoplasmic-facing. A helical transmembrane segment spans residues Pro-403–Phe-423. Over Gln-424–His-433 the chain is Extracellular. The chain crosses the membrane as a helical span at residues Gly-434–Val-454. Topologically, residues Pro-455 to Met-488 are cytoplasmic.

It belongs to the major facilitator superfamily. Sugar transporter (TC 2.A.1.1) family. Trehalose transporter subfamily.

It is found in the cell membrane. In terms of biological role, fails to transport trehalose. This is Facilitated trehalose transporter Tret1-2 homolog from Drosophila sechellia (Fruit fly).